We begin with the raw amino-acid sequence, 336 residues long: Poly(A) RNA polymerase cid12 (336 aa).

2 residues coordinate Mg(2+): D77 and D79. A PAP-associated domain is found at 209-263; that stretch reads ALLQKFFYFWGVEWTYELFVLRPLTGQIVPKLQKGWLNEVQPNLLSIEDPIDRNN. S325 bears the Phosphoserine mark. Position 327 is a phosphothreonine (T327). Position 329 is a phosphoserine (S329).

The protein belongs to the DNA polymerase type-B-like family. In terms of assembly, cid12, hrr1 and rdp1 interact forming the RNA-directed RNA polymerase complex (RDRC). The RDRC complex interacts with the RITS complex via interaction between ago1 and hrr1. Clr4 has a role in mediating this interaction. Requires Mg(2+) as cofactor. Mn(2+) serves as cofactor.

The protein resides in the cytoplasm. It localises to the nucleus. It carries out the reaction RNA(n) + ATP = RNA(n)-3'-adenine ribonucleotide + diphosphate. Its function is as follows. Has a role in the RNA interference (RNAi) pathway which is important for heterochromatin formation and accurate chromosome segregation. A member of the RNA-directed RNA polymerase complex (RDRC) which is involved in the generation of small interfering RNAs (siRNAs) and mediate their association with the RNA-induced transcriptional silencing (RITS) complex. RITS acts as a priming complex for dsRNA synthesis at the site of non-coding centromeric RNA. This Schizosaccharomyces pombe (strain 972 / ATCC 24843) (Fission yeast) protein is Poly(A) RNA polymerase cid12 (cid12).